A 140-amino-acid polypeptide reads, in one-letter code: 3-hydroxyacyl-[acyl-carrier-protein] dehydratase FabZ (140 aa).

Histidine 47 is an active-site residue.

The protein belongs to the thioester dehydratase family. FabZ subfamily.

It is found in the cytoplasm. The enzyme catalyses a (3R)-hydroxyacyl-[ACP] = a (2E)-enoyl-[ACP] + H2O. Its function is as follows. Involved in unsaturated fatty acids biosynthesis. Catalyzes the dehydration of short chain beta-hydroxyacyl-ACPs and long chain saturated and unsaturated beta-hydroxyacyl-ACPs. The polypeptide is 3-hydroxyacyl-[acyl-carrier-protein] dehydratase FabZ (Streptococcus pneumoniae (strain 70585)).